Consider the following 937-residue polypeptide: Vacuolar membrane protease (937 aa).

Topologically, residues 1–16 (PNGFVKFIRSIFGYRK) are cytoplasmic. A helical membrane pass occupies residues 17 to 37 (TSLTLFVILTYVAVLLLAYLD). Over 38–373 (HSLYYSVDLP…FPTSQVVVAS (336 aa)) the chain is Vacuolar. N-linked (GlcNAc...) asparagine glycans are attached at residues Asn106 and Asn140. Zn(2+)-binding residues include His154 and Asp166. Glu201 functions as the Proton acceptor in the catalytic mechanism. Zn(2+) is bound by residues Glu202, Glu227, and His300. Residues 374–394 (ILLLVLIPGISIPFLIIIFGY) traverse the membrane as a helical segment. Topologically, residues 395–407 (KKNWELSFVNVTK) are cytoplasmic. The chain crosses the membrane as a helical span at residues 408 to 428 (FPISLAISAALLNLFTNGFIV). At 429 to 437 (PFNQFLPNS) the chain is on the vacuolar side. The helical transmembrane segment at 438-458 (SPFALVAILFATFLLLNYLIL) threads the bilayer. The Cytoplasmic segment spans residues 459 to 475 (NGINLIFVSYKIVNHDE). A helical transmembrane segment spans residues 476-496 (KLISIIETSFLYWVVLIYSTA). Over 497 to 510 (KLANNVIGDDHSGE) the chain is Vacuolar. Residues 511–531 (FPIIFLCALQAVASIFGLIGW) form a helical membrane-spanning segment. Over 532 to 580 (SFKPVPKEHYVVVPQEEAEPLLGSSDNFNYGSPDVEDDRLVSDGSYDWS) the chain is Cytoplasmic. A helical membrane pass occupies residues 581 to 601 (IQFLTIVPISTYLIYNSGFLV). Residues 602 to 618 (VDGINKSIQESLISQNL) lie on the Vacuolar side of the membrane. Asn606 carries an N-linked (GlcNAc...) asparagine glycan. A helical transmembrane segment spans residues 619–639 (IYKLLQTFAISLSIPLLPFIF). The Cytoplasmic segment spans residues 640–643 (KVNR). The helical transmembrane segment at 644–664 (LFVLALFLISTIGVLFVATAD) threads the bilayer. At 665–937 (SFNVANPLKL…LVSVSKTVEL (273 aa)) the chain is on the vacuolar side. N-linked (GlcNAc...) asparagine glycans are attached at residues Asn758, Asn870, and Asn887.

Belongs to the peptidase M28 family. Requires Zn(2+) as cofactor.

Its subcellular location is the vacuole membrane. Functionally, may be involved in vacuolar sorting and osmoregulation. The protein is Vacuolar membrane protease of Scheffersomyces stipitis (strain ATCC 58785 / CBS 6054 / NBRC 10063 / NRRL Y-11545) (Yeast).